Reading from the N-terminus, the 304-residue chain is Ubiquitin thioesterase OTU1 (304 aa).

The tract at residues 5 to 83 is UBX-like; that stretch reads RCKTREGTQL…IVEEDKSKLR (79 aa). Residues 105-230 form the OTU domain; sequence IVRRVVPADN…GIHYDPLQRQ (126 aa). Residues 110–116 form a cys-loop region; it reads VPADNSC. Residue Asp-113 is part of the active site. The Nucleophile role is filled by Cys-116. A variable-loop region spans residues 169 to 179; sequence IRREDTWGGAI. Residues 219–223 form a his-loop region; it reads YDGIH. Ile-222 contacts substrate. His-223 is an active-site residue. The S2 site stretch occupies residues 247–252; sequence DEALVQ. The C2H2-type zinc finger occupies 274 to 298; sequence LRCMACQKGLTGQSAARDHAKETGH. His-298 is a catalytic residue.

It localises to the cytoplasm. The catalysed reaction is Thiol-dependent hydrolysis of ester, thioester, amide, peptide and isopeptide bonds formed by the C-terminal Gly of ubiquitin (a 76-residue protein attached to proteins as an intracellular targeting signal).. In terms of biological role, hydrolase that can remove conjugated ubiquitin from proteins and participates in endoplasmic reticulum-associated degradation (ERAD) for misfolded lumenal proteins. May act by triming the ubiquitin chain on the associated substrate to facilitate their threading through the VCP/p97 pore. Ubiquitin moieties on substrates may present a steric impediment to the threading process when the substrate is transferred to the VCP pore and threaded through VCP's axial channel. Mediates deubiquitination of 'Lys-27'-, 'Lys-29'- and 'Lys-33'-linked polyubiquitin chains. Also able to hydrolyze 'Lys-11'-linked ubiquitin chains. Cleaves both polyubiquitin and di-ubiquitin. This Xenopus laevis (African clawed frog) protein is Ubiquitin thioesterase OTU1 (yod1).